A 339-amino-acid polypeptide reads, in one-letter code: Mycothiol acetyltransferase (339 aa).

2 consecutive N-acetyltransferase domains span residues 8–174 and 176–339; these read YEQL…QGLT and LTYP…GELN. Residue glutamate 39 coordinates 1D-myo-inositol 2-(L-cysteinylamino)-2-deoxy-alpha-D-glucopyranoside. An acetyl-CoA-binding site is contributed by 85-87; the sequence is LAV. 1D-myo-inositol 2-(L-cysteinylamino)-2-deoxy-alpha-D-glucopyranoside-binding residues include glutamate 207, lysine 254, and glutamate 270. 274 to 276 is an acetyl-CoA binding site; it reads VCL. Tyrosine 308 serves as a coordination point for 1D-myo-inositol 2-(L-cysteinylamino)-2-deoxy-alpha-D-glucopyranoside.

The protein belongs to the acetyltransferase family. MshD subfamily. Monomer.

The enzyme catalyses 1D-myo-inositol 2-(L-cysteinylamino)-2-deoxy-alpha-D-glucopyranoside + acetyl-CoA = mycothiol + CoA + H(+). Catalyzes the transfer of acetyl from acetyl-CoA to desacetylmycothiol (Cys-GlcN-Ins) to form mycothiol. The polypeptide is Mycothiol acetyltransferase (Corynebacterium urealyticum (strain ATCC 43042 / DSM 7109)).